The following is a 209-amino-acid chain: Ribosomal RNA large subunit methyltransferase E (209 aa).

Glycine 63, tryptophan 65, aspartate 83, aspartate 99, and aspartate 124 together coordinate S-adenosyl-L-methionine. Lysine 164 (proton acceptor) is an active-site residue.

It belongs to the class I-like SAM-binding methyltransferase superfamily. RNA methyltransferase RlmE family.

It is found in the cytoplasm. The catalysed reaction is uridine(2552) in 23S rRNA + S-adenosyl-L-methionine = 2'-O-methyluridine(2552) in 23S rRNA + S-adenosyl-L-homocysteine + H(+). Functionally, specifically methylates the uridine in position 2552 of 23S rRNA at the 2'-O position of the ribose in the fully assembled 50S ribosomal subunit. The polypeptide is Ribosomal RNA large subunit methyltransferase E (Yersinia pseudotuberculosis serotype O:1b (strain IP 31758)).